We begin with the raw amino-acid sequence, 591 residues long: Reduced folate transporter (591 aa).

At Met-1 the chain carries N-acetylmethionine. Residues 1-29 (MVPSSPAVEKQVPVEPGPDPELRSWRHLV) are Cytoplasmic-facing. Ser-5 is modified (phosphoserine). The helical transmembrane segment at 30-50 (CYLCFYGFMAQIRPGESFITP) threads the bilayer. Ile-48 and Thr-49 together coordinate folate. Residues 51–64 (YLLGPDKNFTREQV) lie on the Extracellular side of the membrane. N-linked (GlcNAc...) asparagine glycosylation occurs at Asn-58. A helical membrane pass occupies residues 65 to 87 (TNEITPVLSYSYLAVLVPVFLLT). Residues 88–91 (DYLR) are Cytoplasmic-facing. A helical transmembrane segment spans residues 92 to 112 (YTPVLLLQGLSFVSVWLLLLL). Residues 113 to 116 (GHSV) lie on the Extracellular side of the membrane. A helical membrane pass occupies residues 117-139 (AHMQLMELFYSVTMAARIAYSSY). Residues Glu-123 and Arg-133 each contribute to the folate site. 2',3'-cGAMP-binding residues include Arg-133, Ile-134, Ser-137, Tyr-149, and Arg-157. At 140-153 (IFSLVRPARYQRVA) the chain is on the cytoplasmic side. A helical membrane pass occupies residues 154 to 178 (GYSRAAVLLGVFTSSVLGQLLVTVG). Position 164 (Val-164) interacts with folate. Over 179 to 183 (RVSFS) the chain is Extracellular. The helical transmembrane segment at 184 to 202 (TLNYISLAFLTFSVVLALF) threads the bilayer. Topologically, residues 203–266 (LKRPKRSLFF…ELGDSLRRPQ (64 aa)) are cytoplasmic. Ser-225 is subject to Phosphoserine. The chain crosses the membrane as a helical span at residues 267-292 (LRLWSLWWVFNSAGYYLVVYYVHILW). The folate site is built by Tyr-281, Tyr-282, and Tyr-286. Tyr-282 contributes to the 2',3'-cGAMP binding site. The Extracellular segment spans residues 293 to 304 (NEVDPTTNSARV). The helical transmembrane segment at 305–327 (YNGAADAASTLLGAITSFAAGFV) threads the bilayer. Ser-321 is a binding site for 2',3'-cGAMP. At 328-333 (KIRWAR) the chain is on the cytoplasmic side. The chain crosses the membrane as a helical span at residues 334–354 (WSKLLIAGVTATQAGLVFLLA). Residues 355–360 (HTRHPS) lie on the Extracellular side of the membrane. The chain crosses the membrane as a helical span at residues 361-384 (SIWLCYAAFVLFRGSYQFLVPIAT). Folate-binding residues include Arg-373 and Gln-377. Positions 377, 381, 384, 393, 396, and 400 each coordinate 2',3'-cGAMP. Over 385-398 (FQIASSLSKELCAL) the chain is Cytoplasmic. A helical membrane pass occupies residues 399-422 (VFGVNTFFATIVKTIITFIVSDVR). The segment at 407 to 419 (ATIVKTIITFIVS) is required for substrate-binding. The Extracellular portion of the chain corresponds to 423-430 (GLGLPVRK). A helical transmembrane segment spans residues 431–455 (QFQLYSVYFLILSIIYFLGAMLDGL). The Cytoplasmic portion of the chain corresponds to 456–591 (RHCQRGHHPR…PSDGVQNVNQ (136 aa)). Phosphoserine occurs at positions 474, 485, 499, and 503.

Belongs to the reduced folate carrier (RFC) transporter (TC 2.A.48) family. In terms of tissue distribution, placenta, liver, and to a much smaller extent, in lung.

The protein localises to the cell membrane. It localises to the apical cell membrane. Its subcellular location is the basolateral cell membrane. The enzyme catalyses 5-amino-1-(5-phospho-beta-D-ribosyl)imidazole-4-carboxamide(in) + (6S)-5-methyl-5,6,7,8-tetrahydrofolate(out) = 5-amino-1-(5-phospho-beta-D-ribosyl)imidazole-4-carboxamide(out) + (6S)-5-methyl-5,6,7,8-tetrahydrofolate(in). It catalyses the reaction 2',3'-cGAMP(out) + 5-amino-1-(5-phospho-beta-D-ribosyl)imidazole-4-carboxamide(in) = 2',3'-cGAMP(in) + 5-amino-1-(5-phospho-beta-D-ribosyl)imidazole-4-carboxamide(out). It carries out the reaction 3',3'-cGAMP(out) + 5-amino-1-(5-phospho-beta-D-ribosyl)imidazole-4-carboxamide(in) = 3',3'-cGAMP(in) + 5-amino-1-(5-phospho-beta-D-ribosyl)imidazole-4-carboxamide(out). Its function is as follows. Antiporter that mediates the import of reduced folates or a subset of cyclic dinucleotides, driven by the export of organic anions. Acts as an importer of immunoreactive cyclic dinucleotides, such as cyclic GMP-AMP (2'-3'-cGAMP), an immune messenger produced in response to DNA virus in the cytosol, and its linkage isomer 3'-3'-cGAMP, thus playing a role in triggering larger immune responses. Mechanistically, acts as a secondary active transporter, which exports intracellular organic anions down their concentration gradients to facilitate the uptake of its substrates. Has high affinity for N5-methyltetrahydrofolate, the predominant circulating form of folate. Also mediates the import of antifolate drug methotrexate. 5-amino-4-imidazolecarboxamide riboside (AICAR), when phosphorylated to AICAR monophosphate, can serve as an organic anion for antiporter activity. The sequence is that of Reduced folate transporter from Homo sapiens (Human).